The sequence spans 67 residues: MPNNNSSNQLLVPGVQQALNQMKEEIASEFGVQLGPDASSRANGSVGGEITKRLVRQAQSQMNGYTK.

The protein belongs to the alpha/beta-type SASP family.

SASP are bound to spore DNA. They are double-stranded DNA-binding proteins that cause DNA to change to an a-like conformation. They protect the DNA backbone from chemical and enzymatic cleavage and are thus involved in dormant spore's high resistance to UV light. The polypeptide is Small, acid-soluble spore protein 2 (Su-2) (Sporosarcina ureae).